The primary structure comprises 189 residues: Glucose-6-phosphate isomerase (189 aa).

The Fe cation site is built by His88, His90, Glu97, and His136.

This sequence belongs to the archaeal-type GPI family. As to quaternary structure, homodimer. The cofactor is Fe cation.

It is found in the cytoplasm. It catalyses the reaction alpha-D-glucose 6-phosphate = beta-D-fructose 6-phosphate. It participates in carbohydrate degradation; glycolysis; D-glyceraldehyde 3-phosphate and glycerone phosphate from D-glucose: step 2/4. The sequence is that of Glucose-6-phosphate isomerase (pgiA) from Pyrococcus horikoshii (strain ATCC 700860 / DSM 12428 / JCM 9974 / NBRC 100139 / OT-3).